The following is a 67-amino-acid chain: Phycobilisome 7.8 kDa linker polypeptide, allophycocyanin-associated, core (67 aa).

Residues methionine 1–alanine 56 enclose the CpcD-like domain.

Belongs to the phycobilisome linker protein family.

The protein localises to the cellular thylakoid membrane. Functionally, rod linker protein, associated with allophycocyanin. Linker polypeptides determine the state of aggregation and the location of the disk-shaped phycobiliprotein units within the phycobilisome and modulate their spectroscopic properties in order to mediate a directed and optimal energy transfer. In Synechococcus sp. (strain ATCC 27144 / PCC 6301 / SAUG 1402/1) (Anacystis nidulans), this protein is Phycobilisome 7.8 kDa linker polypeptide, allophycocyanin-associated, core (apcC).